Here is a 217-residue protein sequence, read N- to C-terminus: Probable transaldolase (217 aa).

Lys83 functions as the Schiff-base intermediate with substrate in the catalytic mechanism.

The protein belongs to the transaldolase family. Type 3B subfamily.

The protein resides in the cytoplasm. The enzyme catalyses D-sedoheptulose 7-phosphate + D-glyceraldehyde 3-phosphate = D-erythrose 4-phosphate + beta-D-fructose 6-phosphate. It functions in the pathway carbohydrate degradation; pentose phosphate pathway; D-glyceraldehyde 3-phosphate and beta-D-fructose 6-phosphate from D-ribose 5-phosphate and D-xylulose 5-phosphate (non-oxidative stage): step 2/3. Its function is as follows. Transaldolase is important for the balance of metabolites in the pentose-phosphate pathway. This is Probable transaldolase from Clostridium botulinum (strain Okra / Type B1).